We begin with the raw amino-acid sequence, 254 residues long: Imidazole glycerol phosphate synthase subunit HisF (254 aa).

Residues aspartate 11 and aspartate 130 contribute to the active site.

The protein belongs to the HisA/HisF family. In terms of assembly, heterodimer of HisH and HisF.

It localises to the cytoplasm. It carries out the reaction 5-[(5-phospho-1-deoxy-D-ribulos-1-ylimino)methylamino]-1-(5-phospho-beta-D-ribosyl)imidazole-4-carboxamide + L-glutamine = D-erythro-1-(imidazol-4-yl)glycerol 3-phosphate + 5-amino-1-(5-phospho-beta-D-ribosyl)imidazole-4-carboxamide + L-glutamate + H(+). It participates in amino-acid biosynthesis; L-histidine biosynthesis; L-histidine from 5-phospho-alpha-D-ribose 1-diphosphate: step 5/9. Its function is as follows. IGPS catalyzes the conversion of PRFAR and glutamine to IGP, AICAR and glutamate. The HisF subunit catalyzes the cyclization activity that produces IGP and AICAR from PRFAR using the ammonia provided by the HisH subunit. This is Imidazole glycerol phosphate synthase subunit HisF from Trichlorobacter lovleyi (strain ATCC BAA-1151 / DSM 17278 / SZ) (Geobacter lovleyi).